We begin with the raw amino-acid sequence, 216 residues long: Regulator of G-protein signaling 19 (216 aa).

The segment covering methionine 1–arginine 19 has biased composition (basic and acidic residues). The tract at residues methionine 1–proline 30 is disordered. A phosphoserine mark is found at serine 24 and serine 97. The region spanning serine 90–leucine 206 is the RGS domain. Residue serine 151 is modified to Phosphoserine; by MAPK1 and MAPK3. The segment at leucine 207 to alanine 216 is interaction with GIPC.

Interacts with GIPC PDZ domain. Interacts with GNAO1. Fatty acylated. Heavily palmitoylated in the cysteine string motif. Post-translationally, phosphorylated, mainly on serine residues.

It localises to the membrane. Its function is as follows. Inhibits signal transduction by increasing the GTPase activity of G protein alpha subunits thereby driving them into their inactive GDP-bound form. Binds to G-alpha subfamily 1 members, with the order G(i)a3 &gt; G(i)a1 &gt; G(o)a &gt;&gt; G(z)a/G(i)a2. Activity on G(z)-alpha is inhibited by phosphorylation and palmitoylation of the G-protein. The protein is Regulator of G-protein signaling 19 (Rgs19) of Mus musculus (Mouse).